The sequence spans 306 residues: Uracil phosphoribosyltransferase homolog (306 aa).

Disordered stretches follow at residues 1–28 (MATELRCPDSMPCHNQQVNSASTQNPEP) and 58–87 (SSVPAELDPQASGGATFNSENNGGTGNYDA). 2 stretches are compositionally biased toward polar residues: residues 13–28 (CHNQQVNSASTQNPEP) and 70–79 (GGATFNSENN). GTP contacts are provided by residues R130, R139, and 173-176 (EKGN). R183 is a binding site for 5-phospho-alpha-D-ribose 1-diphosphate. The GTP site is built by R200 and R229. Position 235-243 (235-243 (YPILSTGNT)) interacts with 5-phospho-alpha-D-ribose 1-diphosphate. Residue 296 to 298 (THF) participates in uracil binding.

It belongs to the UPRTase family.

It localises to the cytoplasm. The protein resides in the nucleus. The sequence is that of Uracil phosphoribosyltransferase homolog (UPRT) from Bos taurus (Bovine).